Consider the following 398-residue polypeptide: Signal-regulatory protein beta-1 isoform 3 (398 aa).

An N-terminal signal peptide occupies residues 1–29 (MPVPASWPHLPSPFLLMTLLLGRLTGVAG). At 30–371 (EEELQVIQPD…GPALASAAPL (342 aa)) the chain is on the extracellular side. Residues 31 to 136 (EELQVIQPDK…SPDHVEFKSG (106 aa)) enclose the Ig-like V-type domain. Intrachain disulfides connect cysteine 54-cysteine 120 and cysteine 169-cysteine 227. Ig-like C1-type domains are found at residues 147–246 (PSAP…ANLS) and 253–347 (PTLE…HDLK). Asparagine 244, asparagine 291, and asparagine 318 each carry an N-linked (GlcNAc...) asparagine glycan. Cysteines 272 and 330 form a disulfide. A compositionally biased stretch (basic and acidic residues) spans 337 to 354 (QPAVSKSHDLKVSAHPKE). A disordered region spans residues 337–361 (QPAVSKSHDLKVSAHPKEQGSNTAP). A helical transmembrane segment spans residues 372–392 (LIAFLLGPKVLLVVGVSVIYV). At 393-398 (YWKQKA) the chain is on the cytoplasmic side.

It localises to the membrane. Its function is as follows. Immunoglobulin-like cell surface receptor involved in the negative regulation of receptor tyrosine kinase-coupled signaling processes. The sequence is that of Signal-regulatory protein beta-1 isoform 3 (SIRPB1) from Homo sapiens (Human).